The primary structure comprises 422 residues: UDP-N-acetylglucosamine 1-carboxyvinyltransferase (422 aa).

22 to 23 (KN) provides a ligand contact to phosphoenolpyruvate. Residue Arg-92 coordinates UDP-N-acetyl-alpha-D-glucosamine. The active-site Proton donor is Cys-116. Cys-116 bears the 2-(S-cysteinyl)pyruvic acid O-phosphothioketal mark. Asp-306 and Ile-328 together coordinate UDP-N-acetyl-alpha-D-glucosamine.

Belongs to the EPSP synthase family. MurA subfamily.

It is found in the cytoplasm. It catalyses the reaction phosphoenolpyruvate + UDP-N-acetyl-alpha-D-glucosamine = UDP-N-acetyl-3-O-(1-carboxyvinyl)-alpha-D-glucosamine + phosphate. It participates in cell wall biogenesis; peptidoglycan biosynthesis. Cell wall formation. Adds enolpyruvyl to UDP-N-acetylglucosamine. The protein is UDP-N-acetylglucosamine 1-carboxyvinyltransferase of Elusimicrobium minutum (strain Pei191).